A 163-amino-acid polypeptide reads, in one-letter code: uncharacterized protein (163 aa).

Positions Gln136–Arg161 form a coiled coil.

This is an uncharacterized protein from Acanthamoeba polyphaga (Amoeba).